Consider the following 153-residue polypeptide: NADPH-dependent 7-cyano-7-deazaguanine reductase (153 aa).

The disordered stretch occupies residues 1–30 (MDSIETHAKQLGQQTPLPASPEAAQLDRVP). Cys51 (thioimide intermediate) is an active-site residue. The Proton donor role is filled by Asp58. Residues 73 to 75 (VES) and 92 to 93 (HE) each bind substrate.

Belongs to the GTP cyclohydrolase I family. QueF type 1 subfamily.

The protein resides in the cytoplasm. The enzyme catalyses 7-aminomethyl-7-carbaguanine + 2 NADP(+) = 7-cyano-7-deazaguanine + 2 NADPH + 3 H(+). It functions in the pathway tRNA modification; tRNA-queuosine biosynthesis. Functionally, catalyzes the NADPH-dependent reduction of 7-cyano-7-deazaguanine (preQ0) to 7-aminomethyl-7-deazaguanine (preQ1). The polypeptide is NADPH-dependent 7-cyano-7-deazaguanine reductase (Methylorubrum extorquens (strain CM4 / NCIMB 13688) (Methylobacterium extorquens)).